We begin with the raw amino-acid sequence, 262 residues long: DNA-directed RNA polymerase subunit Rpo3 (262 aa).

Belongs to the archaeal Rpo3/eukaryotic RPB3 RNA polymerase subunit family. In terms of assembly, part of the RNA polymerase complex.

It is found in the cytoplasm. The catalysed reaction is RNA(n) + a ribonucleoside 5'-triphosphate = RNA(n+1) + diphosphate. Its function is as follows. DNA-dependent RNA polymerase (RNAP) catalyzes the transcription of DNA into RNA using the four ribonucleoside triphosphates as substrates. This is DNA-directed RNA polymerase subunit Rpo3 from Pyrobaculum islandicum (strain DSM 4184 / JCM 9189 / GEO3).